The sequence spans 423 residues: Imidazolonepropionase (423 aa).

Fe(3+)-binding residues include histidine 78 and histidine 80. Positions 78 and 80 each coordinate Zn(2+). 4-imidazolone-5-propanoate-binding residues include arginine 87, tyrosine 150, and histidine 183. An N-formimidoyl-L-glutamate-binding site is contributed by tyrosine 150. Histidine 247 lines the Fe(3+) pocket. Histidine 247 contributes to the Zn(2+) binding site. Glutamate 250 serves as a coordination point for 4-imidazolone-5-propanoate. Aspartate 322 serves as a coordination point for Fe(3+). Aspartate 322 lines the Zn(2+) pocket. Residues asparagine 324 and glycine 326 each coordinate N-formimidoyl-L-glutamate. Residue serine 327 coordinates 4-imidazolone-5-propanoate.

This sequence belongs to the metallo-dependent hydrolases superfamily. HutI family. Zn(2+) serves as cofactor. The cofactor is Fe(3+).

It is found in the cytoplasm. The catalysed reaction is 4-imidazolone-5-propanoate + H2O = N-formimidoyl-L-glutamate. It functions in the pathway amino-acid degradation; L-histidine degradation into L-glutamate; N-formimidoyl-L-glutamate from L-histidine: step 3/3. Functionally, catalyzes the hydrolytic cleavage of the carbon-nitrogen bond in imidazolone-5-propanoate to yield N-formimidoyl-L-glutamate. It is the third step in the universal histidine degradation pathway. The chain is Imidazolonepropionase from Bacillus anthracis (strain A0248).